The primary structure comprises 140 residues: Cytochrome c-type biogenesis protein CcmE (140 aa).

Residues 1-7 lie on the Cytoplasmic side of the membrane; that stretch reads MKRKHKR. Residues 8 to 28 traverse the membrane as a helical; Signal-anchor for type II membrane protein segment; the sequence is LLFVLASFCAAGCALLFILSE. The Periplasmic portion of the chain corresponds to 29–140; it reads LRESVSFFYT…TAPKSSPEPK (112 aa). 2 residues coordinate heme: H121 and Y125.

It belongs to the CcmE/CycJ family.

The protein localises to the cell inner membrane. Functionally, heme chaperone required for the biogenesis of c-type cytochromes. Transiently binds heme delivered by CcmC and transfers the heme to apo-cytochromes in a process facilitated by CcmF and CcmH. This chain is Cytochrome c-type biogenesis protein CcmE, found in Anaplasma marginale (strain St. Maries).